The following is a 340-amino-acid chain: S-adenosylmethionine:tRNA ribosyltransferase-isomerase (340 aa).

It belongs to the QueA family. As to quaternary structure, monomer.

The protein localises to the cytoplasm. It catalyses the reaction 7-aminomethyl-7-carbaguanosine(34) in tRNA + S-adenosyl-L-methionine = epoxyqueuosine(34) in tRNA + adenine + L-methionine + 2 H(+). Its pathway is tRNA modification; tRNA-queuosine biosynthesis. Transfers and isomerizes the ribose moiety from AdoMet to the 7-aminomethyl group of 7-deazaguanine (preQ1-tRNA) to give epoxyqueuosine (oQ-tRNA). The sequence is that of S-adenosylmethionine:tRNA ribosyltransferase-isomerase from Vesicomyosocius okutanii subsp. Calyptogena okutanii (strain HA).